The primary structure comprises 143 residues: Peptide methionine sulfoxide reductase MsrB (143 aa).

The region spanning 16-139 is the MsrB domain; that stretch reads DAELRRRLTP…NSAALNFESR (124 aa). Residues C55, C58, C104, and C107 each contribute to the Zn(2+) site. The active-site Nucleophile is C128.

It belongs to the MsrB Met sulfoxide reductase family. Zn(2+) is required as a cofactor.

The catalysed reaction is L-methionyl-[protein] + [thioredoxin]-disulfide + H2O = L-methionyl-(R)-S-oxide-[protein] + [thioredoxin]-dithiol. This is Peptide methionine sulfoxide reductase MsrB from Burkholderia orbicola (strain MC0-3).